A 477-amino-acid chain; its full sequence is Ribulose bisphosphate carboxylase large chain (477 aa).

The propeptide occupies 1 to 2 (MS). Proline 3 is subject to N-acetylproline. Lysine 14 is modified (N6,N6,N6-trimethyllysine). Substrate contacts are provided by asparagine 123 and threonine 173. Lysine 175 acts as the Proton acceptor in catalysis. Residue lysine 177 coordinates substrate. The Mg(2+) site is built by lysine 201, aspartate 203, and glutamate 204. An N6-carboxylysine modification is found at lysine 201. Histidine 294 serves as the catalytic Proton acceptor. Residues arginine 295, histidine 327, and serine 379 each coordinate substrate.

The protein belongs to the RuBisCO large chain family. Type I subfamily. As to quaternary structure, heterohexadecamer of 8 large chains and 8 small chains; disulfide-linked. The disulfide link is formed within the large subunit homodimers. Mg(2+) serves as cofactor. Post-translationally, the disulfide bond which can form in the large chain dimeric partners within the hexadecamer appears to be associated with oxidative stress and protein turnover.

Its subcellular location is the plastid. The protein resides in the chloroplast. The catalysed reaction is 2 (2R)-3-phosphoglycerate + 2 H(+) = D-ribulose 1,5-bisphosphate + CO2 + H2O. It carries out the reaction D-ribulose 1,5-bisphosphate + O2 = 2-phosphoglycolate + (2R)-3-phosphoglycerate + 2 H(+). In terms of biological role, ruBisCO catalyzes two reactions: the carboxylation of D-ribulose 1,5-bisphosphate, the primary event in carbon dioxide fixation, as well as the oxidative fragmentation of the pentose substrate in the photorespiration process. Both reactions occur simultaneously and in competition at the same active site. The protein is Ribulose bisphosphate carboxylase large chain (rbcL) of Solanum tuberosum (Potato).